A 361-amino-acid chain; its full sequence is PTI1-like tyrosine-protein kinase At3g15890 (361 aa).

The region spanning 39 to 328 is the Protein kinase domain; it reads FNYDNKLGEG…ISELEANPLF (290 aa). ATP is bound by residues 45-53 and Lys67; that span reads LGEGRFGSV. Asp165 (proton acceptor) is an active-site residue. 2 disordered regions span residues 195–219 and 323–361; these read TGDG…SGKE and EANP…QQQE. The segment covering 351-361 has biased composition (basic and acidic residues); that stretch reads LEDKDHQQQQE.

Belongs to the protein kinase superfamily. Tyr protein kinase family.

It catalyses the reaction L-tyrosyl-[protein] + ATP = O-phospho-L-tyrosyl-[protein] + ADP + H(+). The chain is PTI1-like tyrosine-protein kinase At3g15890 from Arabidopsis thaliana (Mouse-ear cress).